We begin with the raw amino-acid sequence, 370 residues long: UDP-N-acetylglucosamine--N-acetylmuramyl-(pentapeptide) pyrophosphoryl-undecaprenol N-acetylglucosamine transferase (370 aa).

UDP-N-acetyl-alpha-D-glucosamine contacts are provided by residues 10 to 12 (TGG), N126, S200, I255, and Q300.

This sequence belongs to the glycosyltransferase 28 family. MurG subfamily.

Its subcellular location is the cell membrane. It catalyses the reaction Mur2Ac(oyl-L-Ala-gamma-D-Glu-L-Lys-D-Ala-D-Ala)-di-trans,octa-cis-undecaprenyl diphosphate + UDP-N-acetyl-alpha-D-glucosamine = beta-D-GlcNAc-(1-&gt;4)-Mur2Ac(oyl-L-Ala-gamma-D-Glu-L-Lys-D-Ala-D-Ala)-di-trans,octa-cis-undecaprenyl diphosphate + UDP + H(+). The protein operates within cell wall biogenesis; peptidoglycan biosynthesis. In terms of biological role, cell wall formation. Catalyzes the transfer of a GlcNAc subunit on undecaprenyl-pyrophosphoryl-MurNAc-pentapeptide (lipid intermediate I) to form undecaprenyl-pyrophosphoryl-MurNAc-(pentapeptide)GlcNAc (lipid intermediate II). In Lactobacillus johnsonii (strain CNCM I-12250 / La1 / NCC 533), this protein is UDP-N-acetylglucosamine--N-acetylmuramyl-(pentapeptide) pyrophosphoryl-undecaprenol N-acetylglucosamine transferase.